Reading from the N-terminus, the 1503-residue chain is Lysophospholipase NTE1 (1503 aa).

The Cytoplasmic segment spans residues 1 to 25; sequence MDSSTAALATASAKLDAVAQQGSSS. Residues 26-46 traverse the membrane as a helical segment; sequence WIGFFANIILGIISLVYSILY. The Lumenal portion of the chain corresponds to 47–71; that stretch reads SVLKLTTFSIPSLLYTLFSTSLTVT. A helical transmembrane segment spans residues 72–92; the sequence is MNATTLMLIIVLVFSLVSWFV. Residues 93 to 1503 are Cytoplasmic-facing; that stretch reads RYRYLNMYSR…RTMAPRRASI (1411 aa). Disordered stretches follow at residues 252–348, 454–561, and 722–745; these read RHGG…TTSV, TKGI…SNPF, and KNES…RFMD. 6 stretches are compositionally biased toward polar residues: residues 262–272, 285–302, 487–496, 506–542, 552–561, and 723–737; these read TSATETYTSSR, STVS…SSHG, QRPSSVTASP, KHTS…STLL, PLSQRTSNPF, and NESS…QQGS. A nucleoside 3',5'-cyclic phosphate-binding positions include 658–777 and 821–941; these read GLPV…GYVG and RLTN…IASR. Positions 1200 to 1364 constitute a PNPLA domain; the sequence is LVLGGGGARG…IDNLTVSHMK (165 aa). The GXGXXG motif lies at 1204–1209; sequence GGGARG. Positions 1231-1235 match the GXSXG motif; it reads GTSIG. Catalysis depends on Ser-1233, which acts as the Nucleophile. Residue Asp-1351 is the Proton acceptor of the active site. The DGA/G motif lies at 1351–1353; sequence DGG.

The protein belongs to the NTE family.

The protein localises to the endoplasmic reticulum membrane. The catalysed reaction is a 1-acyl-sn-glycero-3-phosphocholine + H2O = sn-glycerol 3-phosphocholine + a fatty acid + H(+). Its activity is regulated as follows. Inhibited by organophosphorus esters. Intracellular phospholipase B that catalyzes the double deacylation of phosphatidylcholine (PC) to glycerophosphocholine (GroPCho). Plays an important role in membrane lipid homeostasis. Responsible for the rapid PC turnover in response to inositol, elevated temperatures, or when choline is present in the growth medium. This Pyricularia oryzae (strain 70-15 / ATCC MYA-4617 / FGSC 8958) (Rice blast fungus) protein is Lysophospholipase NTE1 (NTE1).